Reading from the N-terminus, the 621-residue chain is pH-response transcription factor pacc-1 (621 aa).

Residues 1–14 (MSSTPAQENGTVNG) show a composition bias toward polar residues. The interval 1–87 (MSSTPAQENG…PTTASNSSAP (87 aa)) is disordered. Positions 15 to 87 (ANAAPAPAPA…PTTASNSSAP (73 aa)) are enriched in low complexity. 3 consecutive C2H2-type zinc fingers follow at residues 95-120 (LVCR…CEKH), 131-155 (LTCQ…VRVH), and 161-183 (HKCD…VKTH). Disordered regions lie at residues 395–539 (PTYA…PETY) and 566–621 (DEDD…PRIN). Composition is skewed to low complexity over residues 409–423 (ASLA…PHSA) and 436–465 (SYTS…VSYP). The YPX[LI] motif 1 motif lies at 464-467 (YPTL). The segment covering 476-486 (PSTSGLGSNFT) has biased composition (polar residues). The segment covering 502 to 511 (RAADEADRAP) has biased composition (basic and acidic residues). The span at 515–525 (ASEQATVSSPS) shows a compositional bias: polar residues. Low complexity predominate over residues 583–595 (RNQQQRNQQQQQQ). Residues 614 to 617 (YPVL) carry the YPX[LI] motif 2 motif.

This sequence belongs to the pacC/RIM101 family. As to quaternary structure, binds to DNA. Interacts with palA/prr-1, which binds to the two YPX[LI] motifs and is required for proteolytic processing. Activated by C-terminal proteolytic cleavage by signaling protease (probably palB/RIM13) at neutral to alkaline ambient pH.

Its subcellular location is the cytoplasm. The protein localises to the nucleus. Functionally, transcription factor that mediates regulation of both acid- and alkaline-expressed genes in response to ambient pH. At alkaline ambient pH, activates transcription of alkaline-expressed genes (including pacc-1 itself) and represses transcription of acid-expressed genes. In Neurospora crassa (strain ATCC 24698 / 74-OR23-1A / CBS 708.71 / DSM 1257 / FGSC 987), this protein is pH-response transcription factor pacc-1 (pacc-1).